A 416-amino-acid chain; its full sequence is Venom allergen 5 (416 aa).

An N-terminal signal peptide occupies residues 1–24; sequence MKGILLLFLKLVVLFVYLCSSVLS. Residues 57–217 enclose the SCP domain; sequence DDRNTIINLH…NYGPAGNLDD (161 aa). Arginine 82 is subject to Arginine amide; in Cryptide Pep-4.

This sequence belongs to the CRISP family. Venom allergen 5-like subfamily. Contains 9 disulfide bonds. Expressed by the venom gland.

The protein resides in the secreted. Its function is as follows. Presents weak lactate dehydrogenase (LDH) release from mast cells. Does not induce hemolytic activity, mast cell degranulation, and antimicrobial effects. In vivo, injection into mice causes moderate edema formation, but induces very weak or no change in nociceptive sensibility. It also causes an alteration in rearing (standing on hind limbs), but does not impact locomotion. This Tityus serrulatus (Brazilian scorpion) protein is Venom allergen 5.